We begin with the raw amino-acid sequence, 343 residues long: Aspartate carbamoyltransferase catalytic subunit (343 aa).

Positions 91 and 92 each coordinate carbamoyl phosphate. Lysine 119 provides a ligand contact to L-aspartate. The carbamoyl phosphate site is built by arginine 141, histidine 171, and glutamine 174. Positions 204 and 259 each coordinate L-aspartate. Carbamoyl phosphate-binding residues include glycine 300 and proline 301.

Belongs to the aspartate/ornithine carbamoyltransferase superfamily. ATCase family. In terms of assembly, heterododecamer (2C3:3R2) of six catalytic PyrB chains organized as two trimers (C3), and six regulatory PyrI chains organized as three dimers (R2).

It catalyses the reaction carbamoyl phosphate + L-aspartate = N-carbamoyl-L-aspartate + phosphate + H(+). The protein operates within pyrimidine metabolism; UMP biosynthesis via de novo pathway; (S)-dihydroorotate from bicarbonate: step 2/3. In terms of biological role, catalyzes the condensation of carbamoyl phosphate and aspartate to form carbamoyl aspartate and inorganic phosphate, the committed step in the de novo pyrimidine nucleotide biosynthesis pathway. This Burkholderia orbicola (strain MC0-3) protein is Aspartate carbamoyltransferase catalytic subunit.